A 90-amino-acid polypeptide reads, in one-letter code: Large ribosomal subunit protein eL31 (90 aa).

This sequence belongs to the eukaryotic ribosomal protein eL31 family.

This is Large ribosomal subunit protein eL31 from Natronomonas pharaonis (strain ATCC 35678 / DSM 2160 / CIP 103997 / JCM 8858 / NBRC 14720 / NCIMB 2260 / Gabara) (Halobacterium pharaonis).